The following is a 236-amino-acid chain: Small ribosomal subunit protein eS6 (236 aa).

Phosphoserine is present on residues Ser232 and Ser233.

This sequence belongs to the eukaryotic ribosomal protein eS6 family. In terms of processing, phosphorylated.

This chain is Small ribosomal subunit protein eS6 (RPS6A), found in Candida glabrata (strain ATCC 2001 / BCRC 20586 / JCM 3761 / NBRC 0622 / NRRL Y-65 / CBS 138) (Yeast).